A 203-amino-acid chain; its full sequence is Glycerol-3-phosphate acyltransferase (203 aa).

A run of 5 helical transmembrane segments spans residues 13–33 (TLAC…LILT), 62–82 (LAAA…AIAS), 88–108 (AGIA…WLSF), 118–138 (IGVL…IWLA), and 159–179 (IALY…MTAI).

Belongs to the PlsY family. Probably interacts with PlsX.

It is found in the cell inner membrane. The enzyme catalyses an acyl phosphate + sn-glycerol 3-phosphate = a 1-acyl-sn-glycero-3-phosphate + phosphate. The protein operates within lipid metabolism; phospholipid metabolism. Functionally, catalyzes the transfer of an acyl group from acyl-phosphate (acyl-PO(4)) to glycerol-3-phosphate (G3P) to form lysophosphatidic acid (LPA). This enzyme utilizes acyl-phosphate as fatty acyl donor, but not acyl-CoA or acyl-ACP. In Rhizobium meliloti (strain 1021) (Ensifer meliloti), this protein is Glycerol-3-phosphate acyltransferase.